The following is a 375-amino-acid chain: Palmitoyltransferase PFA4 (375 aa).

Over 1–9 the chain is Cytoplasmic; it reads MAVLVKWPW. Residues 10–30 form a helical membrane-spanning segment; it reads LGVAIPCFLISFTGYFAHFFV. At 31–33 the chain is on the lumenal side; sequence LTN. Residues 34–54 traverse the membrane as a helical segment; the sequence is FLSFKELLWFQVSLSMIWISY. The Cytoplasmic segment spans residues 55–121; that stretch reads WKAIYKNPGR…MNCVGYKNFP (67 aa). Residues 78–128 enclose the DHHC domain; sequence NYCTKCETYKPERTHHCKRCNQCVLVMDHHCPWTMNCVGYKNFPHFIRFLF. The active-site S-palmitoyl cysteine intermediate is cysteine 108. Residues 122–142 traverse the membrane as a helical segment; that stretch reads HFIRFLFWIIATTGILLHYFV. At 143–164 the chain is on the lumenal side; that stretch reads KRIKFTWVNRYATANLVSKQEL. The chain crosses the membrane as a helical span at residues 165–185; that stretch reads IFLTILTPLDAFILLTISLLF. At 186–375 the chain is on the cytoplasmic side; that stretch reads VRCVKNQIVN…EHFGVDVEVE (190 aa).

The protein belongs to the DHHC palmitoyltransferase family. PFA4 subfamily.

The protein resides in the endoplasmic reticulum membrane. The enzyme catalyses L-cysteinyl-[protein] + hexadecanoyl-CoA = S-hexadecanoyl-L-cysteinyl-[protein] + CoA. In terms of biological role, mediates the reversible addition of palmitate to target proteins, thereby regulating their membrane association and biological function. The chain is Palmitoyltransferase PFA4 from Eremothecium gossypii (strain ATCC 10895 / CBS 109.51 / FGSC 9923 / NRRL Y-1056) (Yeast).